The chain runs to 305 residues: Fructose-bisphosphate aldolase (305 aa).

S49 serves as a coordination point for D-glyceraldehyde 3-phosphate. D80 serves as the catalytic Proton donor. 4 residues coordinate Zn(2+): H81, D102, E132, and H178. G179 contributes to the dihydroxyacetone phosphate binding site. Residue H208 participates in Zn(2+) binding. Dihydroxyacetone phosphate contacts are provided by residues 209 to 211 and 251 to 254; these read GAS and NTDT.

The protein belongs to the class II fructose-bisphosphate aldolase family. Homotetramer. It depends on Zn(2+) as a cofactor.

It catalyses the reaction beta-D-fructose 1,6-bisphosphate = D-glyceraldehyde 3-phosphate + dihydroxyacetone phosphate. The protein operates within carbohydrate degradation; glycolysis; D-glyceraldehyde 3-phosphate and glycerone phosphate from D-glucose: step 4/4. Catalyzes the aldol condensation of dihydroxyacetone phosphate (DHAP or glycerone-phosphate) with glyceraldehyde 3-phosphate (G3P) to form fructose 1,6-bisphosphate (FBP) in gluconeogenesis and the reverse reaction in glycolysis. The polypeptide is Fructose-bisphosphate aldolase (Thermus caldophilus).